A 379-amino-acid polypeptide reads, in one-letter code: Acyl-CoA dehydrogenase, short-chain specific (379 aa).

The protein belongs to the acyl-CoA dehydrogenase family. Requires FAD as cofactor.

It catalyses the reaction butanoyl-CoA + oxidized [electron-transfer flavoprotein] + H(+) = (2E)-butenoyl-CoA + reduced [electron-transfer flavoprotein]. The catalysed reaction is a short-chain 2,3-saturated fatty acyl-CoA + oxidized [electron-transfer flavoprotein] + H(+) = a short-chain (2E)-enoyl-CoA + reduced [electron-transfer flavoprotein]. It participates in lipid metabolism; butanoate metabolism. In Clostridium acetobutylicum (strain ATCC 824 / DSM 792 / JCM 1419 / IAM 19013 / LMG 5710 / NBRC 13948 / NRRL B-527 / VKM B-1787 / 2291 / W), this protein is Acyl-CoA dehydrogenase, short-chain specific (bcd).